The primary structure comprises 381 residues: Adenylate cyclase (381 aa).

Residues 1–30 form a disordered region; sequence MTVDDTGSGADGDGRVDPEPAPDSADPGED. Positions 191 to 300 constitute a Guanylate cyclase domain; it reads AVGFADLVGF…TTVNLASRLT (110 aa). Mg(2+)-binding residues include D196 and D240.

It belongs to the adenylyl cyclase class-3 family. Requires Mg(2+) as cofactor.

The enzyme catalyses ATP = 3',5'-cyclic AMP + diphosphate. This is Adenylate cyclase (cya) from Streptomyces coelicolor (strain ATCC BAA-471 / A3(2) / M145).